A 495-amino-acid chain; its full sequence is tRNA(Ile)-lysidine synthase (495 aa).

26–31 (SGGSDS) contacts ATP.

This sequence belongs to the tRNA(Ile)-lysidine synthase family.

The protein localises to the cytoplasm. The enzyme catalyses cytidine(34) in tRNA(Ile2) + L-lysine + ATP = lysidine(34) in tRNA(Ile2) + AMP + diphosphate + H(+). Ligates lysine onto the cytidine present at position 34 of the AUA codon-specific tRNA(Ile) that contains the anticodon CAU, in an ATP-dependent manner. Cytidine is converted to lysidine, thus changing the amino acid specificity of the tRNA from methionine to isoleucine. The chain is tRNA(Ile)-lysidine synthase from Bartonella tribocorum (strain CIP 105476 / IBS 506).